The sequence spans 50 residues: Large ribosomal subunit protein bL33B (50 aa).

Belongs to the bacterial ribosomal protein bL33 family.

The polypeptide is Large ribosomal subunit protein bL33B (rpmG2) (Enterococcus faecalis (strain ATCC 700802 / V583)).